The primary structure comprises 405 residues: Dynactin subunit 2 (405 aa).

The disordered stretch occupies residues 1-24; sequence MADPKYANLPGIASNEPDVYETSD. Coiled coils occupy residues 102–125 and 379–405; these read QQKY…IQTS and QQTM…KLNK.

This sequence belongs to the dynactin subunit 2 family. As to quaternary structure, subunit of dynactin, a multiprotein complex part of a tripartite complex with dynein and a adapter, such as BICDL1, BICD2 or HOOK3. The dynactin complex is built around ACTR1A/ACTB filament and consists of an actin-related filament composed of a shoulder domain, a pointed end and a barbed end. Its length is defined by its flexible shoulder domain. The soulder is composed of 2 DCTN1 subunits, 4 DCTN2 and 2 DCTN3.

It localises to the cytoplasm. The protein localises to the cytoskeleton. It is found in the microtubule organizing center. The protein resides in the centrosome. Its subcellular location is the membrane. Its function is as follows. Part of the dynactin complex that activates the molecular motor dynein for ultra-processive transport along microtubules. In the dynactin soulder domain, binds the ACTR1A filament and acts as a molecular ruler to determine the length. Modulates cytoplasmic dynein binding to an organelle, and plays a role in prometaphase chromosome alignment and spindle organization during mitosis. Involved in anchoring microtubules to centrosomes. This chain is Dynactin subunit 2 (dctn2), found in Danio rerio (Zebrafish).